Reading from the N-terminus, the 452-residue chain is Ribulose bisphosphate carboxylase large chain (452 aa).

A propeptide spanning residues 1–2 is cleaved from the precursor; that stretch reads MS. At Pro3 the chain carries N-acetylproline. N6,N6,N6-trimethyllysine is present on Lys14. The substrate site is built by Asn123 and Thr173. The active-site Proton acceptor is Lys175. A substrate-binding site is contributed by Lys177. Mg(2+) contacts are provided by Lys201, Asp203, and Glu204. Lys201 is subject to N6-carboxylysine. The active-site Proton acceptor is His294. Substrate contacts are provided by Arg295, Xaa327, and Ser379.

Belongs to the RuBisCO large chain family. Type I subfamily. In terms of assembly, heterohexadecamer of 8 large chains and 8 small chains; disulfide-linked. The disulfide link is formed within the large subunit homodimers. Mg(2+) serves as cofactor. In terms of processing, the disulfide bond which can form in the large chain dimeric partners within the hexadecamer appears to be associated with oxidative stress and protein turnover.

Its subcellular location is the plastid. The protein resides in the chloroplast. It carries out the reaction 2 (2R)-3-phosphoglycerate + 2 H(+) = D-ribulose 1,5-bisphosphate + CO2 + H2O. It catalyses the reaction D-ribulose 1,5-bisphosphate + O2 = 2-phosphoglycolate + (2R)-3-phosphoglycerate + 2 H(+). Its function is as follows. RuBisCO catalyzes two reactions: the carboxylation of D-ribulose 1,5-bisphosphate, the primary event in carbon dioxide fixation, as well as the oxidative fragmentation of the pentose substrate in the photorespiration process. Both reactions occur simultaneously and in competition at the same active site. In Salvadora persica (Toothbrush tree), this protein is Ribulose bisphosphate carboxylase large chain.